The following is a 442-amino-acid chain: Elongation factor 1-gamma (442 aa).

The region spanning 2-87 is the GST N-terminal domain; it reads AAGTLYTYPE…FLSNDALRGS (86 aa). Residues 88–216 enclose the GST C-terminal domain; it reads TPQASAQVLQ…VKLCEKMAQF (129 aa). Basic and acidic residues-rich tracts occupy residues 224-242 and 249-263; these read MQPK…KEGG and QEKK…KAAP. The disordered stretch occupies residues 224–273; it reads MQPKKEAPAKKEKAGKEGGKQQQPQQEKKEKKKEEKKAAPAEEEMDECEA. Residues 281 to 442 form the EF-1-gamma C-terminal domain; it reads AKDPYAHLPK…KSFNQGKIFK (162 aa).

In terms of assembly, EF-1 is composed of four subunits: alpha, beta, delta, and gamma.

Its function is as follows. Probably plays a role in anchoring the complex to other cellular components. The protein is Elongation factor 1-gamma (eef1g) of Carassius auratus (Goldfish).